The chain runs to 107 residues: Large ribosomal subunit protein uL24 (107 aa).

The protein belongs to the universal ribosomal protein uL24 family. Part of the 50S ribosomal subunit.

Functionally, one of two assembly initiator proteins, it binds directly to the 5'-end of the 23S rRNA, where it nucleates assembly of the 50S subunit. Its function is as follows. One of the proteins that surrounds the polypeptide exit tunnel on the outside of the subunit. The protein is Large ribosomal subunit protein uL24 of Neisseria gonorrhoeae (strain ATCC 700825 / FA 1090).